The following is a 716-amino-acid chain: Beta-1,2-glucosyltransferase (716 aa).

Positions 52, 99, 101, 102, 175, 176, 278, 279, 343, and 349 each coordinate sophorose. Glu176 acts as the Proton donor/acceptor in catalysis. Residues Glu176, Gly278, and Trp279 each coordinate beta-D-glucose. Residue Glu343 is the Nucleophile of the active site. Residues Arg349, Lys358, and Glu361 each contribute to the beta-D-glucose site. Tyr378 provides a ligand contact to sophorose. Ser708 and Tyr709 together coordinate beta-D-glucose.

It belongs to the glycosyl hydrolase 35 family. In terms of assembly, homidimer.

The protein resides in the cytoplasm. It carries out the reaction a D-glucoside + [(1-&gt;2)-beta-D-glucosyl](n) = a beta-D-glucosyl-(1-&gt;2)-D-glucoside + [(1-&gt;2)-beta-D-glucosyl](n-1). In terms of biological role, glycosyltransferase acting on beta-1,2-glucooligosaccharides. Catalyzes the transfer of a glucosyl residue from the non-reducing end of a 1,2-beta-D-glucan to a glucose residue of an acceptor molecule, forming a beta-1,2-glucosidic bond. The beta-1,2-linked glucose dimer sophorose is the preferred donor in vitro. Has a very broad specificity for the acceptor and can act on various aryl- and alkyl-glucosides. Does not show any hydrolytic activity. The sequence is that of Beta-1,2-glucosyltransferase from Ignavibacterium album (strain DSM 19864 / JCM 16511 / NBRC 101810 / Mat9-16).